We begin with the raw amino-acid sequence, 183 residues long: Dual-action ribosomal maturation protein DarP (183 aa).

Belongs to the DarP family.

It is found in the cytoplasm. Functionally, member of a network of 50S ribosomal subunit biogenesis factors which assembles along the 30S-50S interface, preventing incorrect 23S rRNA structures from forming. Promotes peptidyl transferase center (PTC) maturation. This chain is Dual-action ribosomal maturation protein DarP, found in Salmonella paratyphi A (strain ATCC 9150 / SARB42).